Consider the following 323-residue polypeptide: Phosphatidylethanolamine:ceramide ethanolaminephosphotransferase (323 aa).

Residues 1–26 are Cytoplasmic-facing; sequence MAVPPVEMYSGSFWNRMRKPLPLRTQ. Residues 27-47 form a helical membrane-spanning segment; it reads VIRFTVVFVIVSFILAVALQI. Over 48-73 the chain is Extracellular; it reads THERMPDPKVTKPLPDLGFEVLHKYP. Residues 74–94 form a helical membrane-spanning segment; sequence FLFSVADCCIGFLNILSVFTA. The Cytoplasmic segment spans residues 95-147; sequence FKLYLLHRHCVGSGEPELPCNIPGVSRFFLSVWLCKENCRIELRNVHTIAWIR. The chain crosses the membrane as a helical span at residues 148–168; the sequence is FITSYALLLLSRSVIMVVTSL. Residues 169 to 211 are Extracellular-facing; the sequence is PNPDDLCQDPPKIENRVKDVILTVLTAGAGSIHCGDLMYSGHT. His-210 is a catalytic residue. Residues 212 to 232 form a helical membrane-spanning segment; it reads VILTLHLMFHWIYGAMVHWSF. Residue Arg-233 is a topological domain, cytoplasmic. The helical transmembrane segment at 234 to 254 threads the bilayer; it reads PVVTVVAIFGYYCIVASRFHY. Residues His-253 and Asp-257 contribute to the active site. At 255-257 the chain is on the extracellular side; that stretch reads TDD. The chain crosses the membrane as a helical span at residues 258–278; sequence VLVAIYLTIATFIAVGHNADG. Residues 279 to 323 are Cytoplasmic-facing; that stretch reads APWQLQLFIRWLPCCGANSREVTEDGVPVAIVIKNEEMMNFEGKS.

Belongs to the sphingomyelin synthase family.

The protein resides in the membrane. Its function is as follows. Bidirectional lipid ethanolaminephosphotransferase capable of converting phosphatidylethanolamine (PE) and ceramide to ethanolamine-phosphorylceramide (EPC) and diacylglycerol (DAG) and vice versa. Direction is dependent on the relative concentrations of DAG and ceramide as phosphoethanolamine acceptors. Does not function strictly as a SM synthase. Essential for viability of the pathogenic bloodstream stage of this human protozoan parasite and, consequently, can be considered as potential drug target. This chain is Phosphatidylethanolamine:ceramide ethanolaminephosphotransferase, found in Trypanosoma brucei brucei (strain 927/4 GUTat10.1).